A 206-amino-acid chain; its full sequence is Type III pantothenate kinase (206 aa).

5–12 (DIGNSTAK) serves as a coordination point for ATP. Substrate-binding positions include tyrosine 67 and 72–75 (GVDR). The active-site Proton acceptor is aspartate 74. Aspartate 89 contributes to the K(+) binding site. ATP is bound at residue serine 92. Threonine 144 serves as a coordination point for substrate.

This sequence belongs to the type III pantothenate kinase family. As to quaternary structure, homodimer. NH4(+) is required as a cofactor. The cofactor is K(+).

The protein resides in the cytoplasm. The enzyme catalyses (R)-pantothenate + ATP = (R)-4'-phosphopantothenate + ADP + H(+). The protein operates within cofactor biosynthesis; coenzyme A biosynthesis; CoA from (R)-pantothenate: step 1/5. Functionally, catalyzes the phosphorylation of pantothenate (Pan), the first step in CoA biosynthesis. The chain is Type III pantothenate kinase from Campylobacter hominis (strain ATCC BAA-381 / DSM 21671 / CCUG 45161 / LMG 19568 / NCTC 13146 / CH001A).